Consider the following 237-residue polypeptide: Uridylate kinase (237 aa).

11-14 serves as a coordination point for ATP; that stretch reads KLSG. Gly-53 lines the UMP pocket. ATP-binding residues include Gly-54 and Arg-58. UMP is bound by residues Asp-73 and 134–141; that span reads TGNPFFTT. ATP is bound by residues Thr-161, Tyr-167, and Asp-170.

The protein belongs to the UMP kinase family. Homohexamer.

It is found in the cytoplasm. The enzyme catalyses UMP + ATP = UDP + ADP. Its pathway is pyrimidine metabolism; CTP biosynthesis via de novo pathway; UDP from UMP (UMPK route): step 1/1. Inhibited by UTP. In terms of biological role, catalyzes the reversible phosphorylation of UMP to UDP. This is Uridylate kinase from Paraburkholderia xenovorans (strain LB400).